A 377-amino-acid chain; its full sequence is Chaperone protein DnaJ (377 aa).

Residues 5–70 enclose the J domain; the sequence is DCYEVLGISR…QKKAAYDQYG (66 aa). The CR-type zinc finger occupies 133-211; the sequence is GISKEIQIPT…CHGHGRYERS (79 aa). Zn(2+)-binding residues include C146, C149, C163, C166, C185, C188, C199, and C202. 4 CXXCXGXG motif repeats span residues 146–153, 163–170, 185–192, and 199–206; these read CEQCNGSG, CGTCYGQG, CPTCRGQG, and CHKCHGHG.

It belongs to the DnaJ family. Homodimer. Zn(2+) serves as cofactor.

The protein resides in the cytoplasm. Functionally, participates actively in the response to hyperosmotic and heat shock by preventing the aggregation of stress-denatured proteins and by disaggregating proteins, also in an autonomous, DnaK-independent fashion. Unfolded proteins bind initially to DnaJ; upon interaction with the DnaJ-bound protein, DnaK hydrolyzes its bound ATP, resulting in the formation of a stable complex. GrpE releases ADP from DnaK; ATP binding to DnaK triggers the release of the substrate protein, thus completing the reaction cycle. Several rounds of ATP-dependent interactions between DnaJ, DnaK and GrpE are required for fully efficient folding. Also involved, together with DnaK and GrpE, in the DNA replication of plasmids through activation of initiation proteins. The sequence is that of Chaperone protein DnaJ from Psychromonas ingrahamii (strain DSM 17664 / CCUG 51855 / 37).